A 43-amino-acid chain; its full sequence is Large ribosomal subunit protein uL11 (43 aa).

Belongs to the universal ribosomal protein uL11 family. As to quaternary structure, part of the ribosomal stalk of the 50S ribosomal subunit. Interacts with L10 and the large rRNA to form the base of the stalk. L10 forms an elongated spine to which L12 dimers bind in a sequential fashion forming a multimeric L10(L12)X complex. Post-translationally, one or more lysine residues are methylated.

Forms part of the ribosomal stalk which helps the ribosome interact with GTP-bound translation factors. This chain is Large ribosomal subunit protein uL11 (rplK), found in Streptomyces galbus.